The chain runs to 288 residues: MALFQKKKYIKINPNRSIIEKQAEQPEVPDELFAKCPACKHTIYQKDLGKNKVCPNCDYNFRITAKERLAIVADKDSFIEMFTGIESKNPLDFPGYPEKLAATKARTGLDEAVMTGTATIKGQKTALAIMDSTFIMASMGTVVGEKLTRLFEYATTEKLPIIVFTASGGARMQEGIMSLMQMAKTSAAVKRHSNAGLFYITVLTDPTTGGVTASFASLGDIILAEPQSLIGFAGRRVIEQTVRQTLPDDFQKAEFLLNHGFVDAIVKRTELRQKLALLLELHTEVENV.

Positions 32–288 (LFAKCPACKH…LELHTEVENV (257 aa)) constitute a CoA carboxyltransferase N-terminal domain. Zn(2+)-binding residues include cysteine 36, cysteine 39, cysteine 54, and cysteine 57. A C4-type zinc finger spans residues 36 to 57 (CPACKHTIYQKDLGKNKVCPNC).

This sequence belongs to the AccD/PCCB family. In terms of assembly, acetyl-CoA carboxylase is a heterohexamer composed of biotin carboxyl carrier protein (AccB), biotin carboxylase (AccC) and two subunits each of ACCase subunit alpha (AccA) and ACCase subunit beta (AccD). Zn(2+) is required as a cofactor.

It is found in the cytoplasm. It catalyses the reaction N(6)-carboxybiotinyl-L-lysyl-[protein] + acetyl-CoA = N(6)-biotinyl-L-lysyl-[protein] + malonyl-CoA. Its pathway is lipid metabolism; malonyl-CoA biosynthesis; malonyl-CoA from acetyl-CoA: step 1/1. Functionally, component of the acetyl coenzyme A carboxylase (ACC) complex. Biotin carboxylase (BC) catalyzes the carboxylation of biotin on its carrier protein (BCCP) and then the CO(2) group is transferred by the transcarboxylase to acetyl-CoA to form malonyl-CoA. The sequence is that of Acetyl-coenzyme A carboxylase carboxyl transferase subunit beta from Lactococcus lactis subsp. cremoris (strain MG1363).